The primary structure comprises 481 residues: Membrane-bound lytic murein transglycosylase F (481 aa).

Residues 1–21 form the signal peptide; that stretch reads MKPLKLNYFFIGIITLLLALA. Residues 22 to 268 form a non-LT domain region; sequence LWPSIPWRSS…RLEEKYLGHV (247 aa). The segment at 269–481 is LT domain; sequence GEFDYVDTTT…PAVPLTKVPE (213 aa). Glutamate 313 is a catalytic residue.

In the N-terminal section; belongs to the bacterial solute-binding protein 3 family. It in the C-terminal section; belongs to the transglycosylase Slt family.

The protein resides in the cell outer membrane. It catalyses the reaction Exolytic cleavage of the (1-&gt;4)-beta-glycosidic linkage between N-acetylmuramic acid (MurNAc) and N-acetylglucosamine (GlcNAc) residues in peptidoglycan, from either the reducing or the non-reducing ends of the peptidoglycan chains, with concomitant formation of a 1,6-anhydrobond in the MurNAc residue.. In terms of biological role, murein-degrading enzyme that degrades murein glycan strands and insoluble, high-molecular weight murein sacculi, with the concomitant formation of a 1,6-anhydromuramoyl product. Lytic transglycosylases (LTs) play an integral role in the metabolism of the peptidoglycan (PG) sacculus. Their lytic action creates space within the PG sacculus to allow for its expansion as well as for the insertion of various structures such as secretion systems and flagella. This Pectobacterium atrosepticum (strain SCRI 1043 / ATCC BAA-672) (Erwinia carotovora subsp. atroseptica) protein is Membrane-bound lytic murein transglycosylase F.